Reading from the N-terminus, the 488-residue chain is Gamma-aminobutyric acid receptor subunit beta-4 (488 aa).

A signal peptide spans 1 to 25; sequence MWTFQADRLSGIVSALAALCVACCA. Topologically, residues 26–244 are extracellular; sequence QSPSTGNISV…SFRIKRNIGY (219 aa). N-linked (GlcNAc...) asparagine glycosylation is found at Asn-32, Asn-104, Asn-173, and Asn-195. Cys-160 and Cys-174 form a disulfide bridge. A run of 3 helical transmembrane segments spans residues 245-266, 271-292, and 304-326; these read FILQ…SFWI, SAAR…NTHL, and AIDV…YAFV. Residues 327–465 are Cytoplasmic-facing; sequence NYIFFGRGPR…DLTDVSTIDK (139 aa). A helical transmembrane segment spans residues 466–487; sequence WSRIIFPITFGFFNLVYWLYYV.

Belongs to the ligand-gated ion channel (TC 1.A.9) family. Gamma-aminobutyric acid receptor (TC 1.A.9.5) subfamily. GABRB4 sub-subfamily. As to quaternary structure, generally pentameric. There are five types of GABA(A) receptor chains: alpha, beta, gamma, delta, and rho.

It is found in the postsynaptic cell membrane. Its subcellular location is the cell membrane. Its function is as follows. GABA, the major inhibitory neurotransmitter in the vertebrate brain, mediates neuronal inhibition by binding to the GABA/benzodiazepine receptor and opening an integral chloride channel. This Gallus gallus (Chicken) protein is Gamma-aminobutyric acid receptor subunit beta-4 (GABRB4).